A 250-amino-acid chain; its full sequence is Probable transcriptional regulatory protein Plut_1643 (250 aa).

Belongs to the TACO1 family.

Its subcellular location is the cytoplasm. The chain is Probable transcriptional regulatory protein Plut_1643 from Chlorobium luteolum (strain DSM 273 / BCRC 81028 / 2530) (Pelodictyon luteolum).